The following is a 108-amino-acid chain: Peptidyl-prolyl cis-trans isomerase FKBP1B (108 aa).

The region spanning 20–108 (GQICVVHYTG…IFDVELLNLE (89 aa)) is the PPIase FKBP-type domain.

It belongs to the FKBP-type PPIase family. FKBP1 subfamily. In terms of assembly, identified in a complex composed of RYR2, FKBP1B, PKA catalytic subunit, PRKAR2A, AKAP6, and the protein phosphatases PP2A and PP1. Interacts directly with RYR2. As to expression, detected in heart muscle (at protein level). Ubiquitous.

The protein localises to the cytoplasm. The protein resides in the sarcoplasmic reticulum. It catalyses the reaction [protein]-peptidylproline (omega=180) = [protein]-peptidylproline (omega=0). Its activity is regulated as follows. Inhibited by both FK506 and rapamycin. Functionally, has the potential to contribute to the immunosuppressive and toxic effects of FK506 and rapamycin. PPIases accelerate the folding of proteins. It catalyzes the cis-trans isomerization of proline imidic peptide bonds in oligopeptides. This is Peptidyl-prolyl cis-trans isomerase FKBP1B (Fkbp1b) from Rattus norvegicus (Rat).